Consider the following 501-residue polypeptide: GTPase Obg (501 aa).

The region spanning 2 to 159 is the Obg domain; it reads NRFIDRVVLH…HDLILELKSM (158 aa). Positions 160–341 constitute an OBG-type G domain; that stretch reads ADVGLVGFPS…LKYKLLEIVQ (182 aa). Residues 166–173, 191–195, 212–215, 292–295, and 322–324 each bind GTP; these read GFPSAGKS, FTTLQ, DVPG, NKAD, and SAV. 2 residues coordinate Mg(2+): S173 and T193. The OCT domain occupies 362 to 442; it reads VDHRTKGQFQ…IGGISFEWEP (81 aa).

This sequence belongs to the TRAFAC class OBG-HflX-like GTPase superfamily. OBG GTPase family. In terms of assembly, monomer. Mg(2+) serves as cofactor.

The protein localises to the cytoplasm. Functionally, an essential GTPase which binds GTP, GDP and possibly (p)ppGpp with moderate affinity, with high nucleotide exchange rates and a fairly low GTP hydrolysis rate. Plays a role in control of the cell cycle, stress response, ribosome biogenesis and in those bacteria that undergo differentiation, in morphogenesis control. This is GTPase Obg from Corynebacterium glutamicum (strain R).